The primary structure comprises 600 residues: Isocitrate dehydrogenase kinase/phosphatase (600 aa).

Residues 335–341 and Lys356 contribute to the ATP site; that span reads APGIRGM. Asp390 is an active-site residue.

The protein belongs to the AceK family.

It localises to the cytoplasm. The enzyme catalyses L-seryl-[isocitrate dehydrogenase] + ATP = O-phospho-L-seryl-[isocitrate dehydrogenase] + ADP + H(+). Bifunctional enzyme which can phosphorylate or dephosphorylate isocitrate dehydrogenase (IDH) on a specific serine residue. This is a regulatory mechanism which enables bacteria to bypass the Krebs cycle via the glyoxylate shunt in response to the source of carbon. When bacteria are grown on glucose, IDH is fully active and unphosphorylated, but when grown on acetate or ethanol, the activity of IDH declines drastically concomitant with its phosphorylation. The sequence is that of Isocitrate dehydrogenase kinase/phosphatase from Bordetella parapertussis (strain 12822 / ATCC BAA-587 / NCTC 13253).